The sequence spans 269 residues: Homocitrate synthase subunit alpha (269 aa).

The Pyruvate carboxyltransferase domain occupies 3-255 (INIVDTTLRD…IYTGDFEDII (253 aa)).

The protein belongs to the alpha-IPM synthase/homocitrate synthase family. Heterodimer of an alpha and an omega chain.

It catalyses the reaction acetyl-CoA + 2-oxoglutarate + H2O = (2R)-homocitrate + CoA + H(+). Functionally, this protein is a Fe-Mo-cofactor biosynthetic component. This chain is Homocitrate synthase subunit alpha (nifV-ALPHA), found in Clostridium pasteurianum.